Consider the following 376-residue polypeptide: MTYLMNNYARLPVKFVRGKGVYLYDEEGKEYLDFVSGIGVNSLGHAYPKLTEALKEQVEKLLHVSNLYENPWQEELAHKLVKHFWTEGKVFFANSGTESVEAAIKLARKYWRDKGKNKWKFISFENSFHGRTYGSLSATGQPKFHKGFEPLVPGFSYAKLNDIDSVYKLLDEETAGIIIEVIQGEGGVNEASEDFLSKLQEICKEKDVLLIIDEVQTGIGRTGEFYAYQHFNLKPDVIALAKGLGGGVPIGAILAREEVAQSFTPGSHGSTFGGNPLACRAGTVVVDEVEKLLPHVREVGNYFKEKLKELGKGKVKGRGLMLGLELERECKDYVLKALEKGLLINCTAGKVLRFLPPLIIQKEHIDRAISVLREIL.

Residues 96–97 and F128 contribute to the pyridoxal 5'-phosphate site; that span reads GT. R131 contacts N(2)-acetyl-L-ornithine. Residue 213-216 participates in pyridoxal 5'-phosphate binding; sequence DEVQ. K242 carries the N6-(pyridoxal phosphate)lysine modification. S270 lines the N(2)-acetyl-L-ornithine pocket. T271 is a binding site for pyridoxal 5'-phosphate.

It belongs to the class-III pyridoxal-phosphate-dependent aminotransferase family. ArgD subfamily. Homodimer. Pyridoxal 5'-phosphate is required as a cofactor.

The protein localises to the cytoplasm. The enzyme catalyses N(2)-acetyl-L-ornithine + 2-oxoglutarate = N-acetyl-L-glutamate 5-semialdehyde + L-glutamate. Its pathway is amino-acid biosynthesis; L-arginine biosynthesis; N(2)-acetyl-L-ornithine from L-glutamate: step 4/4. This chain is Acetylornithine aminotransferase, found in Aquifex aeolicus (strain VF5).